Reading from the N-terminus, the 314-residue chain is Homoserine kinase (314 aa).

Pro96–Cys106 contacts ATP.

This sequence belongs to the GHMP kinase family. Homoserine kinase subfamily.

It localises to the cytoplasm. It carries out the reaction L-homoserine + ATP = O-phospho-L-homoserine + ADP + H(+). Its pathway is amino-acid biosynthesis; L-threonine biosynthesis; L-threonine from L-aspartate: step 4/5. Catalyzes the ATP-dependent phosphorylation of L-homoserine to L-homoserine phosphate. This Haemophilus influenzae (strain PittEE) protein is Homoserine kinase.